The chain runs to 239 residues: Protein UL20 homolog (239 aa).

The next 3 membrane-spanning stretches (helical) occupy residues 65–81 (PSFS…ALVI), 140–156 (FVIG…FMVV), and 189–208 (LMPL…STAV).

This sequence belongs to the alphaherpesvirinae UL20 family. In terms of assembly, interacts with gK (via N-terminus); this interaction plays a role in the coordinate transport of UL20 and gK to the trans-Golgi network (TGN), and is required for their cell surface expression. Interacts with gB.

The protein resides in the virion. Its subcellular location is the host cell membrane. It is found in the host endosome membrane. It localises to the host Golgi apparatus membrane. The protein localises to the host nucleus membrane. Its function is as follows. Plays an essential role in egress of virus particles from the nucleus, cytoplasmic envelopment and virus-induced cell fusion. Forms a functional protein complex with gK and this interaction is absolutely essential for their coordinate intracellular transport, gK glycosylation, expression on host cell surface, and function. Together, they modulate gB-mediated virus-induced cell fusion and virion egress and therefore actively participate in these processes. The polypeptide is Protein UL20 homolog (Equus caballus (Horse)).